The chain runs to 345 residues: tRNA-dihydrouridine(20/20a) synthase (345 aa).

FMN-binding positions include 26-28 (PML) and Gln-78. The active-site Proton donor is the Cys-108. Residues Lys-147, His-180, 220–222 (NGG), and 242–243 (GR) each bind FMN.

Belongs to the Dus family. DusA subfamily. FMN is required as a cofactor.

It catalyses the reaction 5,6-dihydrouridine(20) in tRNA + NADP(+) = uridine(20) in tRNA + NADPH + H(+). The enzyme catalyses 5,6-dihydrouridine(20) in tRNA + NAD(+) = uridine(20) in tRNA + NADH + H(+). The catalysed reaction is 5,6-dihydrouridine(20a) in tRNA + NADP(+) = uridine(20a) in tRNA + NADPH + H(+). It carries out the reaction 5,6-dihydrouridine(20a) in tRNA + NAD(+) = uridine(20a) in tRNA + NADH + H(+). Functionally, catalyzes the synthesis of 5,6-dihydrouridine (D), a modified base found in the D-loop of most tRNAs, via the reduction of the C5-C6 double bond in target uridines. Specifically modifies U20 and U20a in tRNAs. This Yersinia pestis protein is tRNA-dihydrouridine(20/20a) synthase.